Consider the following 201-residue polypeptide: Elongation factor Ts (201 aa).

The segment at 81–84 (TDFV) is involved in Mg(2+) ion dislocation from EF-Tu.

The protein belongs to the EF-Ts family.

It is found in the cytoplasm. Associates with the EF-Tu.GDP complex and induces the exchange of GDP to GTP. It remains bound to the aminoacyl-tRNA.EF-Tu.GTP complex up to the GTP hydrolysis stage on the ribosome. The protein is Elongation factor Ts of Syntrophus aciditrophicus (strain SB).